The following is a 98-amino-acid chain: NADH-ubiquinone oxidoreductase chain 4L (98 aa).

The next 3 helical transmembrane spans lie at 1 to 21, 29 to 49, and 61 to 81; these read MSMV…GLLM, SLLC…VTIL, and IILL…LVMV.

It belongs to the complex I subunit 4L family. As to quaternary structure, core subunit of respiratory chain NADH dehydrogenase (Complex I) which is composed of 45 different subunits.

It is found in the mitochondrion inner membrane. The catalysed reaction is a ubiquinone + NADH + 5 H(+)(in) = a ubiquinol + NAD(+) + 4 H(+)(out). Core subunit of the mitochondrial membrane respiratory chain NADH dehydrogenase (Complex I) which catalyzes electron transfer from NADH through the respiratory chain, using ubiquinone as an electron acceptor. Part of the enzyme membrane arm which is embedded in the lipid bilayer and involved in proton translocation. This chain is NADH-ubiquinone oxidoreductase chain 4L (MT-ND4L), found in Eumetopias jubatus (Steller sea lion).